Here is a 956-residue protein sequence, read N- to C-terminus: Netrin receptor UNC5D (956 aa).

Residues 1-30 (MGTGAADGSRGARRWLPWLGLFFWAAGAAA) form the signal peptide. The Extracellular segment spans residues 31-382 (ARGADGSEIL…SRRGIENASD (352 aa)). The 98-residue stretch at 52–149 (PHFIEEPEDA…LGTSKSRKAS (98 aa)) folds into the Ig-like domain. Intrachain disulfides connect Cys-73-Cys-134, Cys-85-Cys-132, Cys-178-Cys-229, Cys-262-Cys-299, Cys-266-Cys-303, Cys-277-Cys-289, Cys-318-Cys-352, Cys-322-Cys-357, and Cys-330-Cys-342. The interval 89–91 (WVH) is important for interaction with FLRT2. 2 N-linked (GlcNAc...) asparagine glycosylation sites follow: Asn-115 and Asn-226. In terms of domain architecture, Ig-like C2-type spans 151–242 (RIAYLRKNFE…NIVAKRRSLS (92 aa)). TSP type-1 domains are found at residues 250–304 (NGGW…ALCP) and 306–358 (DGSW…GLCI). N-linked (GlcNAc...) asparagine glycans are attached at residues Asn-351 and Asn-379. Residues 383-403 (IALYSGLGAAVVAVAVLVIGV) traverse the membrane as a helical segment. Over 404–956 (TLYRRSHSDY…DFNYSRQNGL (553 aa)) the chain is Cytoplasmic. The 141-residue stretch at 545-685 (LRTTGVFGHL…FGTYALTGEP (141 aa)) folds into the ZU5 domain. The Death domain maps to 862–939 (QRICATFDTP…RTHTKLSNIT (78 aa)).

It belongs to the unc-5 family. In terms of assembly, interacts (via extracellular domain) with FLRT2 and FLRT3 (via extracellular domain); the interaction is direct. Has higher affinity for FLRT2. Identified in a complex with FLRT3 and ADGRL3; does not interact with ADGRL3 by itself. In terms of processing, proteolytically cleaved by caspases during apoptosis. The cleavage does not take place when the receptor is associated with netrin ligand. Its cleavage by caspases is required to induce apoptosis. As to expression, detected in multipolar cells in the brain subventricular zone (at protein level). Detected in embryonic brain neocortex, especially in the subventricular zone. Detected in multipolar cells in the brain subventricular zone. Detected in brain neocortex from young pups, especially in the somatosensory cortex. Expressed in developing limb and mammary gland.

The protein resides in the cell membrane. Functionally, receptor for the netrin NTN4 that promotes neuronal cell survival. Plays a role in cell-cell adhesion and cell guidance. Receptor for netrin involved in cell migration. Plays a role in the regulation of neuronal cell migration in the developing brain via its interaction with FLRT2. Plays a role in axon guidance by mediating axon repulsion of neuronal growth cones in the developing nervous system upon ligand binding. May play a role in apoptosis in response to DNA damage. It also acts as a dependence receptor required for apoptosis induction when not associated with netrin ligand. Mediates cell-cell adhesion via its interaction with FLRT3 on an adjacent cell. The protein is Netrin receptor UNC5D (Unc5d) of Mus musculus (Mouse).